The sequence spans 339 residues: Phosphate acyltransferase (339 aa).

Belongs to the PlsX family. As to quaternary structure, homodimer. Probably interacts with PlsY.

It localises to the cytoplasm. It carries out the reaction a fatty acyl-[ACP] + phosphate = an acyl phosphate + holo-[ACP]. It functions in the pathway lipid metabolism; phospholipid metabolism. In terms of biological role, catalyzes the reversible formation of acyl-phosphate (acyl-PO(4)) from acyl-[acyl-carrier-protein] (acyl-ACP). This enzyme utilizes acyl-ACP as fatty acyl donor, but not acyl-CoA. This Clostridium perfringens (strain SM101 / Type A) protein is Phosphate acyltransferase.